The sequence spans 533 residues: 2,3-bisphosphoglycerate-independent phosphoglycerate mutase (533 aa).

The Mn(2+) site is built by Asp-15 and Ser-65. The Phosphoserine intermediate role is filled by Ser-65. Residues His-126, 156–157 (RD), Arg-188, Arg-194, 258–261 (RPDR), and Lys-331 each bind substrate. Mn(2+) is bound by residues Asp-398, His-402, Asp-439, His-440, and His-457.

This sequence belongs to the BPG-independent phosphoglycerate mutase family. Monomer. Mn(2+) is required as a cofactor.

It carries out the reaction (2R)-2-phosphoglycerate = (2R)-3-phosphoglycerate. The protein operates within carbohydrate degradation; glycolysis; pyruvate from D-glyceraldehyde 3-phosphate: step 3/5. In terms of biological role, catalyzes the interconversion of 2-phosphoglycerate and 3-phosphoglycerate. This chain is 2,3-bisphosphoglycerate-independent phosphoglycerate mutase, found in Nostoc sp. (strain PCC 7120 / SAG 25.82 / UTEX 2576).